Consider the following 1072-residue polypeptide: DNA-directed RNA polymerase subunit beta (1072 aa).

Belongs to the RNA polymerase beta chain family. In terms of assembly, in plastids the minimal PEP RNA polymerase catalytic core is composed of four subunits: alpha, beta, beta', and beta''. When a (nuclear-encoded) sigma factor is associated with the core the holoenzyme is formed, which can initiate transcription.

The protein resides in the plastid. It localises to the chloroplast. It catalyses the reaction RNA(n) + a ribonucleoside 5'-triphosphate = RNA(n+1) + diphosphate. Its function is as follows. DNA-dependent RNA polymerase catalyzes the transcription of DNA into RNA using the four ribonucleoside triphosphates as substrates. The protein is DNA-directed RNA polymerase subunit beta of Cycas taitungensis (Prince sago).